Consider the following 702-residue polypeptide: Choline transporter-like protein 5-A (702 aa).

Residues 21–41 form a helical membrane-spanning segment; the sequence is VLCCVLFVIVILGYIALGTVA. Over 42 to 225 the chain is Extracellular; that stretch reads WIHGDPRKVI…KIVEDYASCW (184 aa). 3 N-linked (GlcNAc...) asparagine glycosylation sites follow: Asn-120, Asn-173, and Asn-180. A helical membrane pass occupies residues 226-246; the sequence is YWIVIGLFIALVISLIFILLL. Over 247-249 the chain is Cytoplasmic; the sequence is RFT. The helical transmembrane segment at 250–270 threads the bilayer; the sequence is AGFLLWFIIFAVILLVAYGIW. Topologically, residues 271 to 308 are extracellular; that stretch reads HCYWEFAVLRETPGADVTISDIGFQTDLHVYLQLSQTW. The helical transmembrane segment at 309–329 threads the bilayer; that stretch reads LVFMVTLGLTEASIVLMLIFL. The Cytoplasmic portion of the chain corresponds to 330 to 334; the sequence is RKRVR. A helical transmembrane segment spans residues 335–355; the sequence is IAIALLREGSRAISYIMSALF. Residues 356–357 are Extracellular-facing; it reads YP. The helical transmembrane segment at 358–378 threads the bilayer; sequence IITFVLLAICISYWAMTALFL. Residues 379-443 lie on the Cytoplasmic side of the membrane; it reads ASSGDAVYKV…RYIFILQLCN (65 aa). Residues 444–464 traverse the membrane as a helical segment; it reads LLVFLWLVNFTIALGQCTVAG. Topologically, residues 465-498 are extracellular; it reads AFASYYWARRKPADIPPCPVFSSFSRALRYHTGS. A helical membrane pass occupies residues 499–519; the sequence is LAFGSLILAVVQLIRVILEYL. Residues 520–593 are Cytoplasmic-facing; sequence DHKLKGAHNA…RVAVLDKVTD (74 aa). A helical membrane pass occupies residues 594–614; it reads FLLFLGKLLIAGSVGVIAFFL. The Extracellular portion of the chain corresponds to 615–632; it reads FTRKIPIIQEEVPVLNYY. Residues 633 to 653 traverse the membrane as a helical segment; sequence CVPLLTVILGSYLIAHSFFSV. Residues 654–699 are Cytoplasmic-facing; the sequence is YAMCVDTLFLCFCEDLERNDGTTAKPFFMSPGLKRILGKAEQSPKK.

The protein belongs to the CTL (choline transporter-like) family.

It is found in the cell membrane. It catalyses the reaction choline(out) + n H(+)(in) = choline(in) + n H(+)(out). Its function is as follows. Choline/H+ antiporter. The sequence is that of Choline transporter-like protein 5-A (slc44a5a) from Danio rerio (Zebrafish).